A 140-amino-acid chain; its full sequence is L-fucose mutarotase (140 aa).

Catalysis depends on His22, which acts as the Proton donor. Residues Asp30, Arg107, and 129 to 131 contribute to the substrate site; that span reads YGN.

Belongs to the RbsD / FucU family. FucU mutarotase subfamily. Homodecamer.

The protein resides in the cytoplasm. It catalyses the reaction alpha-L-fucose = beta-L-fucose. It functions in the pathway carbohydrate metabolism; L-fucose metabolism. Involved in the anomeric conversion of L-fucose. In Klebsiella pneumoniae subsp. pneumoniae (strain ATCC 700721 / MGH 78578), this protein is L-fucose mutarotase.